A 62-amino-acid chain; its full sequence is Venom peptide SjAPI-2 (62 aa).

5 disulfide bridges follow: Cys4–Cys40, Cys14–Cys36, Cys18–Cys32, Cys22–Cys60, and Cys42–Cys54. The region spanning 4–60 (CRISGEVFTWCGTTCPLTCENFRNPPKHCPQGCFVGCMCRRGLVRHRNGRCVRPPRC) is the TIL domain.

Belongs to the serine protease inhibitor-like (TIL domain-containing) family. As to expression, expressed by the venom gland.

Its subcellular location is the secreted. In terms of biological role, serine protease inhibitor. The sequence is that of Venom peptide SjAPI-2 from Scorpiops jendeki (Scorpion).